The primary structure comprises 147 residues: D-aminoacyl-tRNA deacylase (147 aa).

The Gly-cisPro motif, important for rejection of L-amino acids motif lies at G136 to P137.

The protein belongs to the DTD family. As to quaternary structure, homodimer.

The protein localises to the cytoplasm. It carries out the reaction glycyl-tRNA(Ala) + H2O = tRNA(Ala) + glycine + H(+). The enzyme catalyses a D-aminoacyl-tRNA + H2O = a tRNA + a D-alpha-amino acid + H(+). In terms of biological role, an aminoacyl-tRNA editing enzyme that deacylates mischarged D-aminoacyl-tRNAs. Also deacylates mischarged glycyl-tRNA(Ala), protecting cells against glycine mischarging by AlaRS. Acts via tRNA-based rather than protein-based catalysis; rejects L-amino acids rather than detecting D-amino acids in the active site. By recycling D-aminoacyl-tRNA to D-amino acids and free tRNA molecules, this enzyme counteracts the toxicity associated with the formation of D-aminoacyl-tRNA entities in vivo and helps enforce protein L-homochirality. The protein is D-aminoacyl-tRNA deacylase of Streptococcus pneumoniae serotype 4 (strain ATCC BAA-334 / TIGR4).